The sequence spans 516 residues: Threonine synthase 2, chloroplastic (516 aa).

The transit peptide at 1–33 directs the protein to the chloroplast; it reads MASFSLPHSATYFPSHSETSLKPHSAASFTVRC. Residues 1–37 are compositionally biased toward polar residues; that stretch reads MASFSLPHSATYFPSHSETSLKPHSAASFTVRCTSAS. The interval 1 to 55 is disordered; the sequence is MASFSLPHSATYFPSHSETSLKPHSAASFTVRCTSASPAVPPQTPQKPRRSPDEN. Residues 133 to 135, 156 to 158, Asn163, Leu164, Lys172, and Asn178 each bind S-adenosyl-L-methionine; these read PYG and SAF. At Lys194 the chain carries N6-(pyridoxal phosphate)lysine. Pyridoxal 5'-phosphate-binding positions include 326-330 and Thr464; that span reads GNLGN.

The protein belongs to the threonine synthase family. In terms of assembly, homodimer. It depends on pyridoxal 5'-phosphate as a cofactor.

It localises to the plastid. The protein resides in the chloroplast. It carries out the reaction O-phospho-L-homoserine + H2O = L-threonine + phosphate. It functions in the pathway amino-acid biosynthesis; L-threonine biosynthesis; L-threonine from L-aspartate: step 5/5. With respect to regulation, allosterically activated by S-adenosyl-methionine (SAM). Catalyzes the gamma-elimination of phosphate from L-phosphohomoserine and the beta-addition of water to produce L-threonine. This Arabidopsis thaliana (Mouse-ear cress) protein is Threonine synthase 2, chloroplastic (TS2).